Consider the following 825-residue polypeptide: NT-3 growth factor receptor (825 aa).

The N-terminal stretch at 1 to 31 (MDVSLCPAKCSFWRIFLLGSVWLDYVGSVLA) is a signal peptide. Disulfide bonds link Cys-32–Cys-38 and Cys-36–Cys-45. The Extracellular portion of the chain corresponds to 32-429 (CPANCVCSKT…TVTHKPEEDT (398 aa)). N-linked (GlcNAc...) asparagine glycans are attached at residues Asn-68, Asn-72, and Asn-79. LRR repeat units lie at residues 104 to 125 (GLQK…AFAK) and 128 to 149 (HLRY…LFQT). N-linked (GlcNAc...) asparagine glycans are attached at residues Asn-133 and Asn-163. Residues 160–209 (NFFNCSCDIRWMQLWQEQGEAKLNSQNLYCINTDGSQLPLFRMNISQCDL) form the LRRCT domain. 2 cysteine pairs are disulfide-bonded: Cys-164-Cys-189 and Cys-166-Cys-207. N-linked (GlcNAc...) asparagine glycosylation is found at Asn-203, Asn-218, Asn-232, Asn-259, Asn-267, Asn-272, and Asn-294. Ig-like C2-type domains are found at residues 210–300 (PEIS…VALT) and 309–382 (SLEE…IAKN). Cysteines 231 and 284 form a disulfide. A disulfide bond links Cys-320 and Cys-362. 2 N-linked (GlcNAc...) asparagine glycosylation sites follow: Asn-375 and Asn-388. A helical membrane pass occupies residues 430–453 (FGVSIAVGLAAFACVLLVVLFVMI). Residues 454–825 (NKYGRRSKFG…ATPIYLDILG (372 aa)) lie on the Cytoplasmic side of the membrane. The residue at position 493 (Ser-493) is a Phosphoserine. Tyr-516 is modified (phosphotyrosine; by autocatalysis). Residues 538–825 (IVLKRELGEG…ATPIYLDILG (288 aa)) enclose the Protein kinase domain. ATP contacts are provided by residues 544–552 (LGEGAFGKV) and Lys-572. The Proton acceptor role is filled by Asp-679. 3 positions are modified to phosphotyrosine; by autocatalysis: Tyr-705, Tyr-709, and Tyr-710.

This sequence belongs to the protein kinase superfamily. Tyr protein kinase family. Insulin receptor subfamily. In terms of assembly, exists in a dynamic equilibrium between monomeric (low affinity) and dimeric (high affinity) structures. Binds SH2B2. Interacts with SQSTM1 and KIDINS220. Interacts with PTPRS. Interacts with MAPK8IP3/JIP3. In terms of processing, ligand-mediated auto-phosphorylation.

It is found in the membrane. It catalyses the reaction L-tyrosyl-[protein] + ATP = O-phospho-L-tyrosyl-[protein] + ADP + H(+). Its function is as follows. Receptor tyrosine kinase involved in nervous system and probably heart development. Upon binding of its ligand NTF3/neurotrophin-3, NTRK3 autophosphorylates and activates different signaling pathways, including the phosphatidylinositol 3-kinase/AKT and the MAPK pathways, that control cell survival and differentiation. The sequence is that of NT-3 growth factor receptor (NTRK3) from Pan troglodytes (Chimpanzee).